The following is a 438-amino-acid chain: UPF0229 protein Smed_1028 (438 aa).

The tract at residues 55-107 (PARGVNEPAFQPDSNSGERRHVLPGNREFAAGDRIPKRGGGGGAGNAGAGTGQ) is disordered. The span at 92–105 (RGGGGGAGNAGAGT) shows a compositional bias: gly residues.

This sequence belongs to the UPF0229 family.

This Sinorhizobium medicae (strain WSM419) (Ensifer medicae) protein is UPF0229 protein Smed_1028.